Reading from the N-terminus, the 114-residue chain is Pole-localizer protein TmaR (114 aa).

The stretch at Arg-70–Asn-111 forms a coiled coil. A disordered region spans residues Lys-89–Lys-114.

Belongs to the pole-localizer TmaR family.

It is found in the cytoplasm. Pole-localizer protein involved in the regulation of several cellular processes. In Haemophilus influenzae (strain PittEE), this protein is Pole-localizer protein TmaR.